Here is a 330-residue protein sequence, read N- to C-terminus: Calponin-3 (330 aa).

At Lys23 the chain carries N6-acetyllysine. The Calponin-homology (CH) domain occupies 26 to 130; sequence QQAEEDLRNW…TLVALAGLAK (105 aa). Position 158 is an N6-methyllysine (Lys158). Calponin-like repeat units follow at residues 164–189, 204–229, and 243–268; these read IGLQMGTNKCASQAGMTAYGTRRHLY, ISLQMGTNKGASQAGMLAPGTRRDIY, and ISLQMGTNKVASQKGMSVYGLGRQVY. A disordered region spans residues 279 to 330; sequence PVIHNGSQGTGTNGSEISDSDYQAEYPDEYHGEYPDDYPREYQYGDDQGIDY. Residues 306–318 show a composition bias toward basic and acidic residues; that stretch reads DEYHGEYPDDYPR.

The protein belongs to the calponin family.

Its function is as follows. Thin filament-associated protein that is implicated in the regulation and modulation of smooth muscle contraction. It is capable of binding to actin, calmodulin and tropomyosin. The interaction of calponin with actin inhibits the actomyosin Mg-ATPase activity. This chain is Calponin-3 (Cnn3), found in Mus musculus (Mouse).